A 510-amino-acid chain; its full sequence is Light-independent protochlorophyllide reductase subunit B (510 aa).

A [4Fe-4S] cluster-binding site is contributed by D36. D296 acts as the Proton donor in catalysis. 431-432 (GM) is a binding site for substrate.

The protein belongs to the ChlB/BchB/BchZ family. Protochlorophyllide reductase is composed of three subunits; ChlL, ChlN and ChlB. Forms a heterotetramer of two ChlB and two ChlN subunits. It depends on [4Fe-4S] cluster as a cofactor.

The protein resides in the plastid. It localises to the chloroplast. It carries out the reaction chlorophyllide a + oxidized 2[4Fe-4S]-[ferredoxin] + 2 ADP + 2 phosphate = protochlorophyllide a + reduced 2[4Fe-4S]-[ferredoxin] + 2 ATP + 2 H2O. It functions in the pathway porphyrin-containing compound metabolism; chlorophyll biosynthesis (light-independent). In terms of biological role, component of the dark-operative protochlorophyllide reductase (DPOR) that uses Mg-ATP and reduced ferredoxin to reduce ring D of protochlorophyllide (Pchlide) to form chlorophyllide a (Chlide). This reaction is light-independent. The NB-protein (ChlN-ChlB) is the catalytic component of the complex. This chain is Light-independent protochlorophyllide reductase subunit B, found in Stigeoclonium helveticum (Green alga).